A 289-amino-acid polypeptide reads, in one-letter code: MSMTSQIMKITKLEITILIDIVAIAAFLAVPGSTNHIYDLLILIFAGTLASMSASIFNNIYDMDIDPKMKRTSSRSQILNANTRSLFFIIATAMVLLSFVTSFILLNPVTSAFILGGFASYVLLYTIILKRRTSLNIVIGGIAGSFPALAGWASITGSVSATSLFIAFLVFMWTPTHFWNLSVNNVDDYKKSNIPMLPAVVGIKRTEFWIMVNTSILVIYSILPLFIKEIHVGLLYMPMAAVMDALLIYYVARPMINNYNKKDFKKAFHFSNMYMLMLLIGIMLILVKF.

9 helical membrane passes run 13-33 (LEIT…VPGS), 37-57 (IYDL…ASIF), 86-106 (LFFI…FILL), 109-129 (VTSA…TIIL), 137-157 (IVIG…SITG), 159-179 (VSAT…THFW), 207-227 (EFWI…PLFI), 232-252 (VGLL…YYVA), and 267-287 (AFHF…LILV).

The protein belongs to the UbiA prenyltransferase family. Protoheme IX farnesyltransferase subfamily.

The protein resides in the cell membrane. It catalyses the reaction heme b + (2E,6E)-farnesyl diphosphate + H2O = Fe(II)-heme o + diphosphate. It functions in the pathway porphyrin-containing compound metabolism; heme O biosynthesis; heme O from protoheme: step 1/1. In terms of biological role, converts heme B (protoheme IX) to heme O by substitution of the vinyl group on carbon 2 of heme B porphyrin ring with a hydroxyethyl farnesyl side group. This chain is Protoheme IX farnesyltransferase 2, found in Picrophilus torridus (strain ATCC 700027 / DSM 9790 / JCM 10055 / NBRC 100828 / KAW 2/3).